The sequence spans 291 residues: HTH-type transcriptional activator AmpR (291 aa).

The 58-residue stretch at 6-63 (LPLNSLRAFEAAARHLSFTHAAIELNVTHSAISQHVKTLEQHLNCQLFVRVSRGLMLT) folds into the HTH lysR-type domain. The segment at residues 23–42 (FTHAAIELNVTHSAISQHVK) is a DNA-binding region (H-T-H motif).

Belongs to the LysR transcriptional regulatory family.

It localises to the cytoplasm. In terms of biological role, this protein is a positive regulator of gene expression of cephalosporinase (AmpC). The sequence is that of HTH-type transcriptional activator AmpR (ampR) from Enterobacter cloacae.